We begin with the raw amino-acid sequence, 247 residues long: O-methyltransferase imqG (247 aa).

S-adenosyl-L-methionine-binding positions include Glu-84, 86 to 87 (GT), and Ala-138. The a divalent metal cation site is built by Asp-163, Asp-189, and Asn-190. Asp-163 is a binding site for substrate.

This sequence belongs to the class I-like SAM-binding methyltransferase superfamily. Cation-dependent O-methyltransferase family. CCoAMT subfamily. Homodimer. It depends on a divalent metal cation as a cofactor.

It functions in the pathway secondary metabolite biosynthesis. Its function is as follows. O-methyltransferase; part of the gene cluster that mediates the biosynthesis of imizoquins A to D, tripeptide-derived alkaloids that serve a protective role against oxidative stress that are essential for normal germination. ImqB is a canonical three-module NRPS that assembles the tripeptide backbone of the imizoquins via condensation of Trp, Tyr, and Leu-derived precursors. N-methylation by imqF and phenol oxidation by imqC, followed by cyclization via the FAD-dependent oxidase imqH carry out the three-step transformation of L-tyrosine into tetrahydroisoquinoline. Importantly, this sequence requires the presence of a free amine in the tyrosine moiety, indicating that isoquinoline formation occurs prior to peptide bond formation. The imidazolidin-4-one ring of imizoquins could form following additional oxidation of the methyl-derived bridgehead carbon by imqH. Lastly, O-methylation by imqG and leucine hydroxylation by imqE complete biosynthesis of the imizoquins. This chain is O-methyltransferase imqG, found in Aspergillus flavus (strain ATCC 200026 / FGSC A1120 / IAM 13836 / NRRL 3357 / JCM 12722 / SRRC 167).